A 180-amino-acid chain; its full sequence is Ribulose bisphosphate carboxylase small subunit, chloroplastic (180 aa).

The N-terminal 57 residues, 1-57, are a transit peptide targeting the chloroplast; sequence MASVVASAAVVTPFAASAASTTKSSQIVSVQAGLKAGVFGGKSEWQTKTQTNGSRVS.

The protein belongs to the RuBisCO small chain family. Heterohexadecamer of 8 large and 8 small subunits.

It is found in the plastid. It localises to the chloroplast. Its function is as follows. RuBisCO catalyzes two reactions: the carboxylation of D-ribulose 1,5-bisphosphate, the primary event in carbon dioxide fixation, as well as the oxidative fragmentation of the pentose substrate. Both reactions occur simultaneously and in competition at the same active site. Although the small subunit is not catalytic it is essential for maximal activity. The sequence is that of Ribulose bisphosphate carboxylase small subunit, chloroplastic from Marchantia paleacea (Liverwort).